The sequence spans 374 residues: Heme A synthase (374 aa).

Positions 1 to 22 are disordered; it reads MSDHIRAASSPSRHGSEHGWQH. The next 5 helical transmembrane spans lie at 32-52, 118-138, 149-169, 184-204, and 226-246; these read ILVA…VMLG, RLWG…LAVT, LILI…MVAS, VVHL…ALSV, and LGLV…HAGL. Residue histidine 281 coordinates heme. 3 helical membrane-spanning segments follow: residues 283-300, 309-329, and 332-352; these read LLAT…LIGF, AVLP…ATLL, and VAVP…TAAI. Heme is bound at residue histidine 340.

The protein belongs to the COX15/CtaA family. Type 2 subfamily. As to quaternary structure, interacts with CtaB. It depends on heme b as a cofactor.

Its subcellular location is the cell membrane. The enzyme catalyses Fe(II)-heme o + 2 A + H2O = Fe(II)-heme a + 2 AH2. Its pathway is porphyrin-containing compound metabolism; heme A biosynthesis; heme A from heme O: step 1/1. In terms of biological role, catalyzes the conversion of heme O to heme A by two successive hydroxylations of the methyl group at C8. The first hydroxylation forms heme I, the second hydroxylation results in an unstable dihydroxymethyl group, which spontaneously dehydrates, resulting in the formyl group of heme A. The polypeptide is Heme A synthase (Granulibacter bethesdensis (strain ATCC BAA-1260 / CGDNIH1)).